The following is an 802-amino-acid chain: MARLFSLKPLVLALGLCFGTHCAAADAVAAEETDNPTAGESVRSVSEPIQPTSLSLGSTCLFCSNESGSPERTEAAVQGSGEASIPEDYTRIVADRMEGQSQVQVRAEGNVVVERNRTTLNTDWADYDQSGDTVTAGDRFALQQDGTLIRGETLTYNLEQQTGEAHNVRMEIEQGGRRLQSVSRTAEMLGEGHYKLTETQFNTCSAGDAGWYVKAASVEADREKGIGVAKHAAFVFGGVPIFYTPWADFPLDGNRKSGLLVPSLSAGSDGVSLSVPYYFNLAPNLDATFAPSVIGERGAVFDGQVRYLRPDYAGQSDLTWLPHDKKSGRNNRYQAKWQHRHDISDTLQAGVDFNQVSDSGYYRDFYGNKEIAGNVNLNRRVWLDYGGRAAGGSLNAGLSVLKYQTLANQSGYKDKPYALMPRLSVEWRKNTGRAQIGVSAQFTRFSHDSRQDGSRLVVYPDIKWDFSNSWGYVRPKLGLHATYYSLNRFGSQEARRVSRTLPIVNIDSGATFERNTRMFGGEVLQTLEPRLFYNYIPAKSQNDLPNFDSSESSFGYGQLFRENLYYGNDRINTANSLSAAVQSRILDGATGEERFRAGIGQKFYFKDDAVMLDGSVGKKPRNRSDWVAFASGSIGSRFILDSSIHYNQNDKRAENYAVGASYRPAQGKVLNARYKYGRNEKIYLKSDGSYFYDKLSQLDLSAQWPLTRNLSAVVRYNYGFEAKKPIEVLAGAEYKSSCGCWGAGVYAQRYVTGENTYKNAVFFSLQLKDLSSVGRNPADRMDVAVPGYITAHSLSAGRNKRP.

A signal peptide spans Met-1–Ala-25.

This sequence belongs to the LptD family. In terms of assembly, component of the lipopolysaccharide transport and assembly complex. Interacts with LptE and LptA.

The protein resides in the cell outer membrane. Together with LptE, is involved in the assembly of lipopolysaccharide (LPS) at the surface of the outer membrane. In Neisseria meningitidis serogroup B (strain ATCC BAA-335 / MC58), this protein is LPS-assembly protein LptD.